Reading from the N-terminus, the 2477-residue chain is Non-reducing polyketide synthase mapC (2477 aa).

The segment at 14–269 (LLFGPQCSEI…HQQTHREGIQ (256 aa)) is N-terminal acylcarrier protein transacylase domain (SAT). In terms of domain architecture, Ketosynthase family 3 (KS3) spans 403 to 820 (MPPIAITGMA…GSNAALIVRD (418 aa)). Residues Cys568, His703, and His742 each act as for beta-ketoacyl synthase activity in the active site. Residues 930 to 1233 (LCFGGQNGVT…HRVNLDGSDG (304 aa)) are malonyl-CoA:ACP transacylase (MAT) domain. Ser1017 acts as the For acyl/malonyl transferase activity in catalysis. The N-terminal hotdog fold stretch occupies residues 1302 to 1435 (QERAGLLRKL…GSVSLCNERS (134 aa)). Positions 1302-1612 (QERAGLLRKL…FMSVSIRSLT (311 aa)) constitute a PKS/mFAS DH domain. A product template (PT) domain region spans residues 1307-1611 (LLRKLSDGPE…RFMSVSIRSL (305 aa)). His1336 functions as the Proton acceptor; for dehydratase activity in the catalytic mechanism. Residues 1461–1612 (ASNGLKGSTV…FMSVSIRSLT (152 aa)) are C-terminal hotdog fold. The Proton donor; for dehydratase activity role is filled by Asp1518. The Carrier domain occupies 1651–1725 (DSDLVAVQEM…GLTEHIFPGH (75 aa)). Position 1685 is an O-(pantetheine 4'-phosphoryl)serine (Ser1685). A methyltransferase (CMeT) domain region spans residues 1882–2117 (PYALEHDLLQ…GFEWVGWTNN (236 aa)). Residues Ser2267 and Asp2421 each act as for thioesterase activity in the active site.

Its subcellular location is the cytoplasm. The protein localises to the cytosol. It catalyses the reaction 3 malonyl-CoA + acetyl-CoA + S-adenosyl-L-methionine + H(+) = 5-methylorsellinate + S-adenosyl-L-homocysteine + 3 CO2 + 4 CoA. The protein operates within secondary metabolite biosynthesis; terpenoid biosynthesis. Its function is as follows. Non-reducing polyketide synthase; part of the gene cluster that mediates the biosynthesis of mycophenolic acid (MPA), the first isolated antibiotic natural product in the world obtained from a culture of Penicillium brevicompactum in 1893. MpaC catalyzes the synthesis of 5-methylorsellinic acid (5MOA) via the condensation of 1 acetyl-CoA starter unit with 3 malonyl-CoA units and one methylation step. The first step of the pathway is the synthesis of 5-methylorsellinic acid (5MOA) by the cytosolic polyketide synthase mpaC. 5MOA is then converted to the phthalide compound 5,7-dihydroxy-4,6-dimethylphthalide (DHMP) by the endoplasmic reticulum-bound cytochrome P450 monooxygenase mpaDE. MpaDE first catalyzes hydroxylation of 5-MOA to 4,6-dihydroxy-2-(hydroxymethyl)-3-methylbenzoic acid (DHMB). MpaDE then acts as a lactone synthase that catalyzes the ring closure to convert DHMB into DHMP. The next step is the prenylation of DHMP by the Golgi apparatus-associated prenyltransferase mpaA to yield farnesyl-DHMP (FDHMP). The ER-bound oxygenase mpaB then mediates the oxidative cleavage the C19-C20 double bond in FDHMP to yield FDHMP-3C via a mycophenolic aldehyde intermediate. The O-methyltransferase mpaG catalyzes the methylation of FDHMP-3C to yield MFDHMP-3C. After the cytosolic methylation of FDHMP-3C, MFDHMP-3C enters into peroxisomes probably via free diffusion due to its low molecular weight. Upon a peroxisomal CoA ligation reaction, catalyzed by a beta-oxidation component enzyme acyl-CoA ligase ACL891, MFDHMP-3C-CoA would then be restricted to peroxisomes for the following beta-oxidation pathway steps. The peroxisomal beta-oxidation machinery than converts MFDHMP-3C-CoA into MPA_CoA, via a beta-oxidation chain-shortening process. Finally mpaH acts as a peroxisomal acyl-CoA hydrolase with high substrate specificity toward MPA-CoA to release the final product MPA. The protein is Non-reducing polyketide synthase mapC of Penicillium roqueforti (strain FM164).